Consider the following 30-residue polypeptide: Cytochrome b6-f complex subunit 8 (30 aa).

A helical transmembrane segment spans residues 4–24 (IISLGWGSLLAIFSFSIALVV).

This sequence belongs to the PetN family. As to quaternary structure, the 4 large subunits of the cytochrome b6-f complex are cytochrome b6, subunit IV (17 kDa polypeptide, PetD), cytochrome f and the Rieske protein, while the 4 small subunits are PetG, PetL, PetM and PetN. The complex functions as a dimer.

The protein resides in the plastid. Its subcellular location is the chloroplast thylakoid membrane. Its function is as follows. Component of the cytochrome b6-f complex, which mediates electron transfer between photosystem II (PSII) and photosystem I (PSI), cyclic electron flow around PSI, and state transitions. This is Cytochrome b6-f complex subunit 8 from Gracilaria tenuistipitata var. liui (Red alga).